A 362-amino-acid chain; its full sequence is Protein-arginine kinase (362 aa).

The Phosphagen kinase C-terminal domain maps to 24 to 255; sequence IVLSSRIRLA…QQLIAQERMA (232 aa). ATP is bound by residues 27-31, histidine 92, arginine 126, 177-181, and 208-213; these read SSRIR, RASVM, and RGTYGE. An RDXXRA motif of the pArg binding pocket involved in allosteric regulation motif is present at residues 338 to 343; it reads RDVRRA.

It belongs to the ATP:guanido phosphotransferase family.

It catalyses the reaction L-arginyl-[protein] + ATP = N(omega)-phospho-L-arginyl-[protein] + ADP + H(+). With respect to regulation, appears to be allosterically activated by the binding of pArg-containing polypeptides to the pArg-binding pocket localized in the C-terminal domain of McsB. In terms of biological role, catalyzes the specific phosphorylation of arginine residues in a large number of proteins. Is part of the bacterial stress response system. Protein arginine phosphorylation has a physiologically important role and is involved in the regulation of many critical cellular processes, such as protein homeostasis, motility, competence, and stringent and stress responses, by regulating gene expression and protein activity. In Geobacillus sp. (strain WCH70), this protein is Protein-arginine kinase.